The sequence spans 859 residues: Active breakpoint cluster region-related protein (859 aa).

The interval 26 to 84 (TDEYDGEGNEEQKGPPEGSETMPYIDESPTMSPQLSARSQGGGDGVSPTPPEGLAPGVE) is disordered. Residues 54 to 64 (PTMSPQLSARS) show a composition bias toward polar residues. S57 carries the post-translational modification Phosphoserine. A DH domain is found at 91-284 (MRKLVLSGFL…QNFLSSINED (194 aa)). Residues 301–459 (QLVKDGFLVE…WREAIQKLQK (159 aa)) enclose the PH domain. Positions 484–613 (TVHNIPVTSN…ETKNWHTDVI (130 aa)) constitute a C2 domain. The Rho-GAP domain maps to 647–845 (VKISVVTKRE…YYLQHPPISF (199 aa)).

As to quaternary structure, interacts with DLG4. Highly enriched in the brain. Much weaker expression in heart, lung and muscle.

Its subcellular location is the cell projection. It localises to the dendritic spine. The protein resides in the axon. It is found in the synapse. Protein with a unique structure having two opposing regulatory activities toward small GTP-binding proteins. The C-terminus is a GTPase-activating protein domain which stimulates GTP hydrolysis by RAC1, RAC2 and CDC42. Accelerates the intrinsic rate of GTP hydrolysis of RAC1 or CDC42, leading to down-regulation of the active GTP-bound form. The central Dbl homology (DH) domain functions as a guanine nucleotide exchange factor (GEF) that modulates the GTPases CDC42, RHOA and RAC1. Promotes the conversion of CDC42, RHOA and RAC1 from the GDP-bound to the GTP-bound form. Functions as an important negative regulator of neuronal RAC1 activity. Regulates macrophage functions such as CSF-1 directed motility and phagocytosis through the modulation of RAC1 activity. The sequence is that of Active breakpoint cluster region-related protein from Homo sapiens (Human).